The following is a 107-amino-acid chain: uncharacterized protein (107 aa).

A run of 2 helical transmembrane segments spans residues 11-31 (CVNF…ILCI) and 58-78 (LFFL…LAFQ).

It is found in the mitochondrion membrane. This is an uncharacterized protein from Saccharomyces cerevisiae (strain ATCC 204508 / S288c) (Baker's yeast).